The sequence spans 395 residues: Phosphopentomutase (395 aa).

Positions 10, 294, 299, 335, 336, and 347 each coordinate Mn(2+).

The protein belongs to the phosphopentomutase family. Mn(2+) is required as a cofactor.

The protein localises to the cytoplasm. The enzyme catalyses 2-deoxy-alpha-D-ribose 1-phosphate = 2-deoxy-D-ribose 5-phosphate. The catalysed reaction is alpha-D-ribose 1-phosphate = D-ribose 5-phosphate. It participates in carbohydrate degradation; 2-deoxy-D-ribose 1-phosphate degradation; D-glyceraldehyde 3-phosphate and acetaldehyde from 2-deoxy-alpha-D-ribose 1-phosphate: step 1/2. Its function is as follows. Isomerase that catalyzes the conversion of deoxy-ribose 1-phosphate (dRib-1-P) and ribose 1-phosphate (Rib-1-P) to deoxy-ribose 5-phosphate (dRib-5-P) and ribose 5-phosphate (Rib-5-P), respectively. This is Phosphopentomutase from Actinobacillus succinogenes (strain ATCC 55618 / DSM 22257 / CCUG 43843 / 130Z).